The chain runs to 405 residues: Angiopoietin-related protein 4 (405 aa).

Residues 1-23 (MRCAPTAGAALVLCAATAGLLSA) form the signal peptide. Residues 54 to 146 (GLREHVERTR…QNLQSQIDLL (93 aa)) are a coiled coil. N176 carries N-linked (GlcNAc...) asparagine glycosylation. The 223-residue stretch at 178–400 (TRLHRPPRDC…ATTLLIQPME (223 aa)) folds into the Fibrinogen C-terminal domain. C187 and C215 are oxidised to a cystine. Residues N231 and N237 are each glycosylated (N-linked (GlcNAc...) asparagine). An intrachain disulfide couples C340 to C353.

In terms of assembly, homooligomer; disulfide-linked via Cys residues in the N-terminal part of the protein. The homooligomer undergoes proteolytic processing to release its carboxyl fibrinogen-like domain, which circulates as a monomer. The homooligomer unprocessed form is able to interact with the extracellular matrix. In terms of processing, N-glycosylated. Post-translationally, forms disulfide-linked dimers and tetramers. Cleaved into a smaller N-terminal chain and a larger chain that contains the fibrinogen C-terminal domain; both cleaved and uncleaved forms are detected in the extracellular space. The cleaved form is not present within the cell.

It is found in the secreted. The protein localises to the extracellular space. Its subcellular location is the extracellular matrix. Its function is as follows. Mediates inactivation of the lipoprotein lipase LPL, and thereby plays a role in the regulation of triglyceride clearance from the blood serum and in lipid metabolism. May also play a role in regulating glucose homeostasis and insulin sensitivity. Inhibits proliferation, migration, and tubule formation of endothelial cells and reduces vascular leakage. Upon heterologous expression, inhibits the adhesion of endothelial cell to the extracellular matrix (ECM), and inhibits the reorganization of the actin cytoskeleton, formation of actin stress fibers and focal adhesions in endothelial cells that have adhered to ANGPTL4-containing ECM (in vitro). Depending on context, may modulate tumor-related angiogenesis. Functionally, mediates inactivation of the lipoprotein lipase LPL, and thereby plays an important role in the regulation of triglyceride clearance from the blood serum and in lipid metabolism. Has higher activity in LPL inactivation than the uncleaved protein. This is Angiopoietin-related protein 4 (Angptl4) from Rattus norvegicus (Rat).